The chain runs to 139 residues: Holo-[acyl-carrier-protein] synthase (139 aa).

2 residues coordinate Mg(2+): Asp8 and Glu57.

It belongs to the P-Pant transferase superfamily. AcpS family. Mg(2+) serves as cofactor.

It is found in the cytoplasm. It catalyses the reaction apo-[ACP] + CoA = holo-[ACP] + adenosine 3',5'-bisphosphate + H(+). Its function is as follows. Transfers the 4'-phosphopantetheine moiety from coenzyme A to a Ser of acyl-carrier-protein. This chain is Holo-[acyl-carrier-protein] synthase, found in Sinorhizobium fredii (strain NBRC 101917 / NGR234).